The primary structure comprises 1336 residues: Aldehyde oxidase 4 (1336 aa).

A 2Fe-2S ferredoxin-type domain is found at 8–95; the sequence is DELIFFVNGK…GAAITTVEGV (88 aa). [2Fe-2S] cluster contacts are provided by cysteine 47, cysteine 52, cysteine 55, and cysteine 77. Residue glutamine 116 coordinates Mo-molybdopterin. Residues cysteine 117, cysteine 120, cysteine 152, and cysteine 154 each coordinate [2Fe-2S] cluster. Cysteine 154 lines the Mo-molybdopterin pocket. Positions 237–423 constitute an FAD-binding PCMH-type domain; it reads FQGKRTTWII…LSIFIPYTAQ (187 aa). FAD-binding positions include 265-272, alanine 346, threonine 355, histidine 359, aspartate 368, and isoleucine 413; that span reads LVMGNTTV. Mo-molybdopterin contacts are provided by residues 804–805, leucine 1045, 1086–1089, glutamine 1201, and leucine 1265; these read AF and GSMG. The Proton acceptor; for azaheterocycle hydroxylase activity role is filled by glutamate 1267.

This sequence belongs to the xanthine dehydrogenase family. In terms of assembly, homodimer. [2Fe-2S] cluster is required as a cofactor. Requires FAD as cofactor. It depends on Mo-molybdopterin as a cofactor. As to expression, highly expressed in Harderian glands and sebaceous glands with detectable levels in the epidermis and other keratinized epithelia (at protein level). Detected in testis. The expression is 3 times greater in females than in males.

Its subcellular location is the cytoplasm. It carries out the reaction an aldehyde + O2 + H2O = a carboxylate + H2O2 + H(+). It catalyses the reaction retinal + O2 + H2O = retinoate + H2O2 + H(+). The catalysed reaction is all-trans-retinal + O2 + H2O = all-trans-retinoate + H2O2 + H(+). Functionally, aldehyde oxidase able to catalyze the oxidation of retinaldehyde into retinoate. Is responsible for the major all-trans-retinaldehyde-metabolizing activity in the Harderian gland, and contributes a significant amount of the same activity in the skin. Is devoid of pyridoxal-oxidizing activity, in contrast to the other aldehyde oxidases. Acts as a negative modulator of the epidermal trophism. May be able to oxidize a wide variety of aldehydes into their corresponding carboxylates and to hydroxylate azaheterocycles. The chain is Aldehyde oxidase 4 (Aox4) from Mus musculus (Mouse).